Reading from the N-terminus, the 307-residue chain is Oxygen-dependent coproporphyrinogen-III oxidase (307 aa).

A substrate-binding site is contributed by serine 94. Residues histidine 98 and histidine 108 each coordinate a divalent metal cation. Histidine 108 (proton donor) is an active-site residue. 110–112 is a binding site for substrate; that stretch reads NVR. 2 residues coordinate a divalent metal cation: histidine 147 and histidine 177. An important for dimerization region spans residues 242-277; sequence YVEFNLVWDRGTLFGLQSGGRTESILMSMPPLAQWQ. 260 to 262 contacts substrate; the sequence is GGR.

Belongs to the aerobic coproporphyrinogen-III oxidase family. As to quaternary structure, homodimer. It depends on a divalent metal cation as a cofactor.

The protein localises to the cytoplasm. The enzyme catalyses coproporphyrinogen III + O2 + 2 H(+) = protoporphyrinogen IX + 2 CO2 + 2 H2O. The protein operates within porphyrin-containing compound metabolism; protoporphyrin-IX biosynthesis; protoporphyrinogen-IX from coproporphyrinogen-III (O2 route): step 1/1. Functionally, involved in the heme biosynthesis. Catalyzes the aerobic oxidative decarboxylation of propionate groups of rings A and B of coproporphyrinogen-III to yield the vinyl groups in protoporphyrinogen-IX. This Chromohalobacter salexigens (strain ATCC BAA-138 / DSM 3043 / CIP 106854 / NCIMB 13768 / 1H11) protein is Oxygen-dependent coproporphyrinogen-III oxidase.